We begin with the raw amino-acid sequence, 415 residues long: Dihydroorotase (415 aa).

2 residues coordinate Zn(2+): His54 and His56. Substrate is bound by residues 56 to 58 and Asn88; that span reads HFR. Residues Lys136, His169, His217, and Asp278 each contribute to the Zn(2+) site. Position 136 is an N6-carboxylysine (Lys136). Asp278 is an active-site residue. His282 contributes to the substrate binding site.

Belongs to the metallo-dependent hydrolases superfamily. DHOase family. Class I DHOase subfamily. Requires Zn(2+) as cofactor.

It carries out the reaction (S)-dihydroorotate + H2O = N-carbamoyl-L-aspartate + H(+). Its pathway is pyrimidine metabolism; UMP biosynthesis via de novo pathway; (S)-dihydroorotate from bicarbonate: step 3/3. Its function is as follows. Catalyzes the reversible cyclization of carbamoyl aspartate to dihydroorotate. This Thermoplasma volcanium (strain ATCC 51530 / DSM 4299 / JCM 9571 / NBRC 15438 / GSS1) protein is Dihydroorotase.